Here is a 354-residue protein sequence, read N- to C-terminus: Methionine import ATP-binding protein MetN (354 aa).

The ABC transporter domain maps to 8 to 250 (LDHIDITFHQ…PKEALTQEFI (243 aa)). 42–49 (GYSGAGKS) is a binding site for ATP.

The protein belongs to the ABC transporter superfamily. Methionine importer (TC 3.A.1.24) family. As to quaternary structure, the complex is composed of two ATP-binding proteins (MetN), two transmembrane proteins (MetI) and a solute-binding protein (MetQ).

The protein localises to the cell membrane. It catalyses the reaction L-methionine(out) + ATP + H2O = L-methionine(in) + ADP + phosphate + H(+). It carries out the reaction D-methionine(out) + ATP + H2O = D-methionine(in) + ADP + phosphate + H(+). Functionally, part of the ABC transporter complex MetNIQ involved in methionine import. Responsible for energy coupling to the transport system. This chain is Methionine import ATP-binding protein MetN, found in Streptococcus pyogenes serotype M4 (strain MGAS10750).